We begin with the raw amino-acid sequence, 241 residues long: Chloride intracellular channel protein 1 (241 aa).

The residue at position 2 (Ala2) is an N-acetylalanine. Residues 2–90 are required for insertion into the membrane; the sequence is AEEQPQVELF…EEFLEAVLCP (89 aa). Lys13 carries the post-translational modification N6-acetyllysine. Cys24 serves as a coordination point for glutathione. Cys24 carries the post-translational modification S-glutathionyl cysteine; alternate. The G-site signature appears at 24 to 27; that stretch reads CPFS. Cys24 and Cys59 are oxidised to a cystine. The chain crosses the membrane as a helical span at residues 26–46; the sequence is FSQRLFMVLWLKGVTFNVTTV. Residues Leu64 and Thr77 each coordinate glutathione. A GST C-terminal domain is found at 93 to 233; that stretch reads YPKLAALNPE…PDDEEIELAY (141 aa). The residue at position 119 (Lys119) is an N6-acetyllysine. Ser121 is modified (phosphoserine). Lys131 is modified (N6-acetyllysine). 2 positions are modified to phosphoserine: Ser156 and Ser211. Phosphotyrosine is present on Tyr233.

Belongs to the chloride channel CLIC family. Monomer. Homodimer (in vitro). Interacts with TRAPPC2. Dimerization requires a conformation change that leads to the exposure of a large hydrophobic surface. In vivo, this may lead to membrane insertion. Interacts with AKAP9. In terms of processing, hydrogen peroxide treatment causes a conformation change, leading to dimerization and formation of an intramolecular disulfide bond between Cys-24 and Cys-59. Expression is prominent in heart, placenta, liver, kidney and pancreas.

It localises to the nucleus. The protein localises to the nucleus membrane. Its subcellular location is the cytoplasm. The protein resides in the cell membrane. It is found in the endoplasmic reticulum. The catalysed reaction is L-dehydroascorbate + 2 glutathione = glutathione disulfide + L-ascorbate. The enzyme catalyses chloride(in) = chloride(out). It catalyses the reaction iodide(out) = iodide(in). It carries out the reaction thiocyanate(in) = thiocyanate(out). The catalysed reaction is nitrate(in) = nitrate(out). The enzyme catalyses bromide(in) = bromide(out). It catalyses the reaction fluoride(in) = fluoride(out). Its activity is regulated as follows. The oxidoreductase activity is inhibited by rapamycin, amphotericin B and IAA-94. The channel conductance is regulated by pH and redox membrane potential. Inhibited by IAA-94. Its function is as follows. In the soluble state, catalyzes glutaredoxin-like thiol disulfide exchange reactions with reduced glutathione as electron donor. Reduces selenite and dehydroascorbate and may act as an antioxidant during oxidative stress response. Can insert into membranes and form voltage-dependent multi-ion conductive channels. Membrane insertion seems to be redox-regulated and may occur only under oxidizing conditions. Involved in regulation of the cell cycle. This Homo sapiens (Human) protein is Chloride intracellular channel protein 1.